A 68-amino-acid polypeptide reads, in one-letter code: Large ribosomal subunit protein bL31 (68 aa).

Zn(2+)-binding residues include cysteine 16, cysteine 18, cysteine 38, and cysteine 41.

Belongs to the bacterial ribosomal protein bL31 family. Type A subfamily. In terms of assembly, part of the 50S ribosomal subunit. Zn(2+) is required as a cofactor.

Functionally, binds the 23S rRNA. The sequence is that of Large ribosomal subunit protein bL31 from Thiobacillus denitrificans (strain ATCC 25259 / T1).